The primary structure comprises 733 residues: Polyribonucleotide nucleotidyltransferase (733 aa).

The tract at residues 404–424 (NYNMPPYSTGETGRVGSPKRR) is disordered. Aspartate 516 and aspartate 522 together coordinate Mg(2+). Positions 582–641 (PRIITVHIPVDKIGEVIGPKGKMINQIQDDTGANISIEDDGTIFIGADNGDSAESARSMI) constitute a KH domain. Residues 653–725 (GERYLGTVVK…DRGKLSLVLA (73 aa)) form the S1 motif domain.

Belongs to the polyribonucleotide nucleotidyltransferase family. Mg(2+) serves as cofactor.

Its subcellular location is the cytoplasm. It carries out the reaction RNA(n+1) + phosphate = RNA(n) + a ribonucleoside 5'-diphosphate. In terms of biological role, involved in mRNA degradation. Catalyzes the phosphorolysis of single-stranded polyribonucleotides processively in the 3'- to 5'-direction. This is Polyribonucleotide nucleotidyltransferase from Cutibacterium acnes (strain DSM 16379 / KPA171202) (Propionibacterium acnes).